Reading from the N-terminus, the 150-residue chain is Geranyl diphosphate phosphohydrolase (150 aa).

The Nudix hydrolase domain occupies Ser14 to Pro147. A Nudix box motif is present at residues Gly48–Asp69. Mg(2+) contacts are provided by Glu63 and Glu67.

The protein belongs to the Nudix hydrolase family. In terms of tissue distribution, expressed in petals. Little or no expression in stamens, sepals or young leaves.

It is found in the cytoplasm. It catalyses the reaction (2E)-geranyl diphosphate + H2O = (2E)-geranyl phosphate + phosphate + H(+). In terms of biological role, involved in a cytosolic pathway for the biosynthesis of free monoterpene alcohols that contribute to fragrance. Lacks terpene synthase activity, but has a diphosphohydrolase activity with geranyl diphosphate and farnesyl diphosphate as substrates. No activity with 8-oxo-dGTP and dGTP and unable to dephosphorylate geranyl phosphate to geraniol. This Rosa hybrid cultivar protein is Geranyl diphosphate phosphohydrolase.